The chain runs to 372 residues: Hydrogenase-2 small chain (372 aa).

The segment at residues 1–37 (MTGDNTLIHSHGINRRDFMKLCAALAATMGLSSKAAA) is a signal peptide (tat-type signal). Residues Cys59, Cys62, Cys157, Cys191, His229, Cys232, Cys257, and Cys263 each contribute to the [4Fe-4S] cluster site. [3Fe-4S] cluster contacts are provided by Cys272, Cys292, and Cys295.

This sequence belongs to the [NiFe]/[NiFeSe] hydrogenase small subunit family. In terms of assembly, heterodimer of a large and a small subunit. [4Fe-4S] cluster serves as cofactor. [3Fe-4S] cluster is required as a cofactor. Predicted to be exported by the Tat system. The position of the signal peptide cleavage has not been experimentally proven.

The protein localises to the cell membrane. It localises to the periplasm. It catalyses the reaction H2 + A = AH2. This is one of three E.coli hydrogenases synthesized in response to different physiological conditions. HYD2 is involved in hydrogen uptake. In Escherichia coli O157:H7, this protein is Hydrogenase-2 small chain (hybO).